The following is a 332-amino-acid chain: uncharacterized protein (332 aa).

The interval 306–332 is disordered; it reads EKNTSEVTEPKTGPSGTKDNYHLHSIF.

This is an uncharacterized protein from Homo sapiens (Human).